A 410-amino-acid polypeptide reads, in one-letter code: Lipoyl synthase, mitochondrial (410 aa).

Residues C134, C139, C145, C165, C169, C172, and S390 each coordinate [4Fe-4S] cluster. The Radical SAM core domain occupies 148-379 (AGKSTAATAT…AKIGNDLGFL (232 aa)).

The protein belongs to the radical SAM superfamily. Lipoyl synthase family. It depends on [4Fe-4S] cluster as a cofactor.

It is found in the mitochondrion. It catalyses the reaction [[Fe-S] cluster scaffold protein carrying a second [4Fe-4S](2+) cluster] + N(6)-octanoyl-L-lysyl-[protein] + 2 oxidized [2Fe-2S]-[ferredoxin] + 2 S-adenosyl-L-methionine + 4 H(+) = [[Fe-S] cluster scaffold protein] + N(6)-[(R)-dihydrolipoyl]-L-lysyl-[protein] + 4 Fe(3+) + 2 hydrogen sulfide + 2 5'-deoxyadenosine + 2 L-methionine + 2 reduced [2Fe-2S]-[ferredoxin]. Its pathway is protein modification; protein lipoylation via endogenous pathway; protein N(6)-(lipoyl)lysine from octanoyl-[acyl-carrier-protein]: step 2/2. Its function is as follows. Catalyzes the radical-mediated insertion of two sulfur atoms into the C-6 and C-8 positions of the octanoyl moiety bound to the lipoyl domains of lipoate-dependent enzymes, thereby converting the octanoylated domains into lipoylated derivatives. This chain is Lipoyl synthase, mitochondrial, found in Schistosoma mansoni (Blood fluke).